The following is an 88-amino-acid chain: Thioredoxin-2 (88 aa).

The 87-residue stretch at 2–88 folds into the Thioredoxin domain; sequence SRVIHISSNE…YRNGAKVSEF (87 aa). Active-site nucleophile residues include Cys-31 and Cys-34. A disulfide bridge connects residues Cys-31 and Cys-34.

Belongs to the thioredoxin family.

Its function is as follows. Participates in various redox reactions through the reversible oxidation of its active center dithiol to a disulfide and catalyzes dithiol-disulfide exchange reactions. The protein is Thioredoxin-2 (trxB) of Dictyostelium discoideum (Social amoeba).